The chain runs to 125 residues: Acyl carrier protein, mitochondrial (125 aa).

A mitochondrion-targeting transit peptide spans 1–36; the sequence is MFRSVCRISSRVAPSAYRTIMGRSVMSNTILAQRFY. The Carrier domain maps to 43–122; sequence DQVSQRVIDV…ETVDYIASNP (80 aa). S82 carries the O-(pantetheine 4'-phosphoryl)serine modification.

It belongs to the acyl carrier protein (ACP) family. Complex I is composed of about 30 different subunits. 4'-phosphopantetheine is transferred from CoA to a specific serine of apo-ACP by acpS. This modification is essential for activity because fatty acids are bound in thioester linkage to the sulfhydryl of the prosthetic group.

Its subcellular location is the mitochondrion. Its pathway is lipid metabolism; fatty acid biosynthesis. Its function is as follows. Carrier of the growing fatty acid chain in fatty acid biosynthesis. May be involved in the synthesis of very-long-chain fatty acids. Accessory and non-catalytic subunit of the mitochondrial membrane respiratory chain NADH dehydrogenase (Complex I), which functions in the transfer of electrons from NADH to the respiratory chain. This chain is Acyl carrier protein, mitochondrial (ACP1), found in Saccharomyces cerevisiae (strain ATCC 204508 / S288c) (Baker's yeast).